The following is a 333-amino-acid chain: MPVLMPSADVPTIDISPLFGTDPDAKAHVARQINEACRGSGFFYASHHGIDVRRLQDVVNEFHRTMTDQEKHDLAIHAYNENNSHVRNGYYMARPGRKTVESWCYLNPSFGEDHPMIKAGTPMHEVNVWPDEERHPDFRSFGEQYYREVFRLSKVLLLRGFALALGKPEEFFENEVTEEDTLSCRSLMIRYPYLDPYPEAAIKTGPDGTRLSFEDHLDVSMITVLFQTEVQNLQVETVDGWQSLPTSGENFLINCGTYLGYLTNDYFPAPNHRVKYVNAERLSLPFFLHAGQNSVMKPFHPEDTGDRKLNPAVTYGEYLQEGFHALIAKNVQT.

Isopenicillin N-binding residues include arginine 87, tyrosine 91, and tyrosine 191. 5 residues coordinate N-[(5S)-5-amino-5-carboxypentanoyl]-L-cysteinyl-D-valine: arginine 87, tyrosine 91, tyrosine 191, histidine 216, and aspartate 218. The Fe2OG dioxygenase domain maps to 180-290 (DTLSCRSLMI…RLSLPFFLHA (111 aa)). The Fe(2+) site is built by histidine 216, aspartate 218, and histidine 272. Arginine 281 is a 2-oxoglutarate binding site. Position 283 (serine 283) interacts with isopenicillin N. N-[(5S)-5-amino-5-carboxypentanoyl]-L-cysteinyl-D-valine is bound at residue serine 283.

The protein belongs to the iron/ascorbate-dependent oxidoreductase family. Fe cation serves as cofactor. The cofactor is L-ascorbate.

The enzyme catalyses N-[(5S)-5-amino-5-carboxypentanoyl]-L-cysteinyl-D-valine + O2 = isopenicillin N + 2 H2O. It participates in antibiotic biosynthesis; penicillin G biosynthesis; penicillin G from L-alpha-aminoadipate and L-cysteine and L-valine: step 2/3. In terms of biological role, removes, in the presence of oxygen, 4 hydrogen atoms from delta-L-(alpha-aminoadipyl)-L-cysteinyl-D-valine (ACV) to form the azetidinone and thiazolidine rings of isopenicillin. The chain is Isopenicillin N synthase (pcbC) from Streptomyces microflavus (Streptomyces lipmanii).